The following is a 222-amino-acid chain: 2-C-methyl-D-erythritol 4-phosphate cytidylyltransferase (222 aa).

The protein belongs to the IspD/TarI cytidylyltransferase family. IspD subfamily.

It carries out the reaction 2-C-methyl-D-erythritol 4-phosphate + CTP + H(+) = 4-CDP-2-C-methyl-D-erythritol + diphosphate. It functions in the pathway isoprenoid biosynthesis; isopentenyl diphosphate biosynthesis via DXP pathway; isopentenyl diphosphate from 1-deoxy-D-xylulose 5-phosphate: step 2/6. Catalyzes the formation of 4-diphosphocytidyl-2-C-methyl-D-erythritol from CTP and 2-C-methyl-D-erythritol 4-phosphate (MEP). This Porphyromonas gingivalis (strain ATCC BAA-308 / W83) protein is 2-C-methyl-D-erythritol 4-phosphate cytidylyltransferase.